The sequence spans 1863 residues: Breast cancer type 1 susceptibility protein homolog (1863 aa).

Residue Met-1 is modified to N-acetylmethionine. An RING-type zinc finger spans residues 24–65 (CPICLELIKEPVSTKCDHIFCKFCMLKLLNQKKGPSQCPLCK). A Glycyl lysine isopeptide (Lys-Gly) (interchain with G-Cter in SUMO2) cross-link involves residue Lys-109. Phosphoserine is present on Ser-114. A disordered region spans residues 230–267 (ETDVTNTEHHQPSNNDLNTTEKRATERHPEKYQGSSVS). The span at 248–260 (TTEKRATERHPEK) shows a compositional bias: basic and acidic residues. Residue Lys-301 forms a Glycyl lysine isopeptide (Lys-Gly) (interchain with G-Cter in SUMO2) linkage. The disordered stretch occupies residues 306-338 (NKSKQPGLARSQHNRWAGSKETCNDRRTPSTEK). Residues 327 to 338 (TCNDRRTPSTEK) are compositionally biased toward basic and acidic residues. Lys-339 participates in a covalent cross-link: Glycyl lysine isopeptide (Lys-Gly) (interchain with G-Cter in SUMO2). A phosphoserine mark is found at Ser-395, Ser-398, Ser-423, and Ser-434. Glycyl lysine isopeptide (Lys-Gly) (interchain with G-Cter in SUMO2) cross-links involve residues Lys-443, Lys-459, and Lys-519. At Ser-551 the chain carries Phosphoserine. Glycyl lysine isopeptide (Lys-Gly) (interchain with G-Cter in SUMO2) cross-links involve residues Lys-583 and Lys-654. Positions 650-739 (IKKKKYNQMP…EKEEKLETVK (90 aa)) are disordered. Ser-694, Ser-708, and Ser-725 each carry phosphoserine. Residues 705–716 (APGSFTNCSNTS) show a composition bias toward polar residues. The segment covering 727 to 737 (PREEKEEKLET) has biased composition (basic and acidic residues). Glycyl lysine isopeptide (Lys-Gly) (interchain with G-Cter in SUMO2) cross-links involve residues Lys-734 and Lys-739. Phosphoserine occurs at positions 753 and 840. A disordered region spans residues 896 to 915 (SPKVTFEREQKEQNQGKNES). A compositionally biased stretch (basic and acidic residues) spans 900-909 (TFEREQKEQN). Glycyl lysine isopeptide (Lys-Gly) (interchain with G-Cter in SUMO2) cross-links involve residues Lys-918 and Lys-987. A Phosphoserine; by CHEK2 modification is found at Ser-988. At Ser-1009 the chain carries Phosphoserine. Lys-1079 participates in a covalent cross-link: Glycyl lysine isopeptide (Lys-Gly) (interchain with G-Cter in SUMO2). 11 positions are modified to phosphoserine: Ser-1143, Ser-1189, Ser-1191, Ser-1211, Ser-1217, Ser-1218, Ser-1280, Ser-1328, Ser-1336, Ser-1342, and Ser-1387. Residues 1181–1216 (VQRGELSRSPSPFTHTHLAQGYRRGAKKLESSEENL) form a disordered region. Residues 1322 to 1395 (KQMRHQSESQ…SSQSDILTTQ (74 aa)) form a disordered region. Residues 1373–1395 (ESETSVSEDCSGLSSQSDILTTQ) show a composition bias toward polar residues. Thr-1394 is modified (phosphothreonine). The interval 1397-1424 (RDTMQDNLIKLQQEMAELEAVLEQHGSQ) is interaction with PALB2. A phosphoserine mark is found at Ser-1423, Ser-1457, Ser-1524, and Ser-1542. Residues 1440 to 1505 (EDLQNPEQST…SSPSKCPSLD (66 aa)) form a disordered region. Polar residues predominate over residues 1444 to 1470 (NPEQSTSEKAVLTSQKSSEYPISQNPE). A disordered region spans residues 1565–1642 (ESGISLFSDD…SREKPELTAS (78 aa)). Positions 1610–1624 (SAQSPAAAHTTNTAG) are enriched in polar residues. BRCT domains follow at residues 1642–1736 (STER…DFEV) and 1756–1855 (QDRK…TYLI).

As to quaternary structure, heterodimer with BARD1. Part of the BRCA1-associated genome surveillance complex (BASC), which contains BRCA1, MSH2, MSH6, MLH1, ATM, BLM, PMS2 and the MRE11-RAD50-NBN protein (MRN) complex. This association could be a dynamic process changing throughout the cell cycle and within subnuclear domains. Component of the BRCA1-A complex, at least composed of BRCA1, BARD1, UIMC1/RAP80, ABRAXAS1, BRCC3/BRCC36, BABAM2 and BABAM1/NBA1. Interacts (via the BRCT domains) with ABRAXAS1 (phosphorylated form); this is important for recruitment to sites of DNA damage. Can form a heterotetramer with two molecules of ABRAXAS1 (phosphorylated form). Component of the BRCA1-RBBP8 complex. Interacts (via the BRCT domains) with RBBP8 ('Ser-327' phosphorylated form); the interaction ubiquitinates RBBP8, regulates CHEK1 activation, and involves RBBP8 in BRCA1-dependent G2/M checkpoint control on DNA damage. Associates with RNA polymerase II holoenzyme. Interacts with SMC1A, NELFB, DCLRE1C, CLSPN. CHEK1, CHEK2, BAP1, BRCC3, UBXN1 and PCLAF. Interacts (via BRCT domains) with BRIP1 (phosphorylated form). Interacts with FANCD2 (ubiquitinated form). Interacts with H2AX (phosphorylated on 'Ser-140'). Interacts (via the BRCT domains) with ACACA (phosphorylated form); the interaction prevents dephosphorylation of ACACA. Part of a BRCA complex containing BRCA1, BRCA2 and PALB2. Interacts directly with PALB2; the interaction is essential for its function in HRR. Interacts directly with BRCA2; the interaction occurs only in the presence of PALB2 which serves as the bridging protein. Interacts (via the BRCT domains) with LMO4; the interaction represses the transcriptional activity of BRCA1. Interacts (via the BRCT domains) with CCAR2 (via N-terminus); the interaction represses the transcriptional activator activity of BRCA1. Interacts with EXD2. Interacts (via C-terminus) with DHX9; this interaction is direct and links BRCA1 to the RNA polymerase II holoenzyme. Interacts with DNA helicase ZGRF1; the interaction is increased following DNA damage induction. Phosphorylated in response to IR, UV, and various stimuli that cause checkpoint activation, probably by ATM or ATR. Phosphorylation at Ser-988 by CHEK2 regulates mitotic spindle assembly. Phosphorylation by AURKA regulates centrosomal microtubule nucleation. In terms of processing, autoubiquitinated, undergoes 'Lys-6'-linked polyubiquitination. 'Lys-6'-linked polyubiquitination does not promote degradation.

Its subcellular location is the nucleus. The protein resides in the chromosome. It localises to the cytoplasm. The catalysed reaction is S-ubiquitinyl-[E2 ubiquitin-conjugating enzyme]-L-cysteine + [acceptor protein]-L-lysine = [E2 ubiquitin-conjugating enzyme]-L-cysteine + N(6)-ubiquitinyl-[acceptor protein]-L-lysine.. Functionally, E3 ubiquitin-protein ligase that specifically mediates the formation of 'Lys-6'-linked polyubiquitin chains and plays a central role in DNA repair by facilitating cellular responses to DNA damage. It is unclear whether it also mediates the formation of other types of polyubiquitin chains. The BRCA1-BARD1 heterodimer coordinates a diverse range of cellular pathways such as DNA damage repair, ubiquitination and transcriptional regulation to maintain genomic stability. Regulates centrosomal microtubule nucleation. Required for appropriate cell cycle arrests after ionizing irradiation in both the S-phase and the G2 phase of the cell cycle. Required for FANCD2 targeting to sites of DNA damage. Inhibits lipid synthesis by binding to inactive phosphorylated ACACA and preventing its dephosphorylation. Contributes to homologous recombination repair (HRR) via its direct interaction with PALB2, fine-tunes recombinational repair partly through its modulatory role in the PALB2-dependent loading of BRCA2-RAD51 repair machinery at DNA breaks. Component of the BRCA1-RBBP8 complex which regulates CHEK1 activation and controls cell cycle G2/M checkpoints on DNA damage via BRCA1-mediated ubiquitination of RBBP8. Acts as a transcriptional activator. The protein is Breast cancer type 1 susceptibility protein homolog (BRCA1) of Pan troglodytes (Chimpanzee).